A 259-amino-acid polypeptide reads, in one-letter code: MSLDLVHFPNYKKTFFGSSFQSDTLALLTRIRDEIGCRYVTHTYRGRVGDCTKVNSADLTVLITLPATWVARYSSKNYFAIDPVFQEDAPYYRNDTSAIARDLKEDADICPAVAELLHDAEKHGLGNLFIAVSARNPKGVAGCTVFTFEVEDEDRTQFLARMRPRLLSLAGIIHGTVCGCKDANSVASLLTPREVDCLRWAANGKTDGEIAEILSIARWTVVTYLQNAKIKLNCSNRTSAVATALSLGIIDMPEVQHLV.

The C12-HSL binding stretch occupies residues 76 to 179; it reads KNYFAIDPVF…AGIIHGTVCG (104 aa). The HTH luxR-type domain occupies 183–248; the sequence is ANSVASLLTP…SAVATALSLG (66 aa). Positions 207-226 form a DNA-binding region, H-T-H motif; it reads DGEIAEILSIARWTVVTYLQ.

Its function is as follows. Transcriptional regulator involved in the global control of Brucella gene expression. Mediates the effects of the quorum sensing autoinducer C12-HSL (N-dodecanoyl-homoserine lactone) on a large and diverse number of genes. This is HTH-type quorum sensing-dependent transcriptional regulator VjbR (vjbR) from Brucella ovis (strain ATCC 25840 / 63/290 / NCTC 10512).